The sequence spans 425 residues: ATP-dependent RNA helicase eIF4A (425 aa).

The short motif at 38–66 (DTWEDYGLKEDLLKGIYSIGFETPSFIQK) is the Q motif element. The Helicase ATP-binding domain occupies 69–241 (IQPIIDGRDI…EEILINPVII (173 aa)). 82–89 (AQSGTGKT) is a binding site for ATP. The short motif at 187 to 190 (DEAD) is the DEAD box element. Residues 252 to 425 (GIRQYFIDLR…KELPADFSFQ (174 aa)) enclose the Helicase C-terminal domain.

The protein belongs to the DEAD box helicase family. eIF4A subfamily. In terms of assembly, component of the eIF4F complex, which composition varies with external and internal environmental conditions. It is composed of at least eIF4A, eIF4E and eIF4G.

It localises to the cytoplasm. The enzyme catalyses ATP + H2O = ADP + phosphate + H(+). Functionally, ATP-dependent RNA helicase which is a subunit of the eIF4F complex involved in cap recognition and is required for mRNA binding to ribosome. In the current model of translation initiation, eIF4A unwinds RNA secondary structures in the 5'-UTR of mRNAs which is necessary to allow efficient binding of the small ribosomal subunit, and subsequent scanning for the initiator codon. In Encephalitozoon cuniculi (strain GB-M1) (Microsporidian parasite), this protein is ATP-dependent RNA helicase eIF4A (TIF1).